We begin with the raw amino-acid sequence, 305 residues long: Ornithine carbamoyltransferase, anabolic (305 aa).

Residues 53 to 56, Gln-80, Arg-104, and 131 to 134 each bind carbamoyl phosphate; these read STRT and HPCQ. L-ornithine is bound by residues Asn-162, Asp-219, and 223–224; that span reads SM. Carbamoyl phosphate contacts are provided by residues 259–260 and Arg-287; that span reads CL.

The protein belongs to the aspartate/ornithine carbamoyltransferase superfamily. OTCase family. In terms of assembly, homotrimer.

It is found in the cytoplasm. It catalyses the reaction carbamoyl phosphate + L-ornithine = L-citrulline + phosphate + H(+). It functions in the pathway amino-acid biosynthesis; L-arginine biosynthesis; L-arginine from L-ornithine and carbamoyl phosphate: step 1/3. Reversibly catalyzes the transfer of the carbamoyl group from carbamoyl phosphate (CP) to the N(epsilon) atom of ornithine (ORN) to produce L-citrulline, which is a substrate for argininosuccinate synthetase (ArgG) involved in the final step in arginine biosynthesis. The sequence is that of Ornithine carbamoyltransferase, anabolic from Pseudomonas aeruginosa (strain ATCC 15692 / DSM 22644 / CIP 104116 / JCM 14847 / LMG 12228 / 1C / PRS 101 / PAO1).